Consider the following 317-residue polypeptide: Probable GTP 3',8-cyclase (317 aa).

In terms of domain architecture, Radical SAM core spans 4-223; sequence RYGRPLEDLR…KSEIREKHFR (220 aa). A GTP-binding site is contributed by Arg13. Residues Cys20, Cys24, and Cys27 each contribute to the [4Fe-4S] cluster site. Lys61 contributes to the GTP binding site. Gly65 contacts S-adenosyl-L-methionine. Thr91 provides a ligand contact to GTP. Ser115 contacts S-adenosyl-L-methionine. Residue Lys152 participates in GTP binding. Positions 246 and 249 each coordinate [4Fe-4S] cluster. 251–253 contributes to the GTP binding site; that stretch reads RVR. Cys263 contributes to the [4Fe-4S] cluster binding site.

Belongs to the radical SAM superfamily. MoaA family. [4Fe-4S] cluster is required as a cofactor.

It catalyses the reaction GTP + AH2 + S-adenosyl-L-methionine = (8S)-3',8-cyclo-7,8-dihydroguanosine 5'-triphosphate + 5'-deoxyadenosine + L-methionine + A + H(+). It functions in the pathway cofactor biosynthesis; molybdopterin biosynthesis. In terms of biological role, catalyzes the cyclization of GTP to (8S)-3',8-cyclo-7,8-dihydroguanosine 5'-triphosphate. In Metallosphaera sedula (strain ATCC 51363 / DSM 5348 / JCM 9185 / NBRC 15509 / TH2), this protein is Probable GTP 3',8-cyclase.